Here is a 212-residue protein sequence, read N- to C-terminus: MSLFDKKHLVSPADALPGRNTPMPVATLHAVNGHSMTNVPDGMEIAIFAMGCFWGVERLFWQLPSVYSTAAGYTGGYTPNPTYREVCSGDTGHAEAVRIVYDPSVISYEQLLQIFWENHDPAQGMRQGNDHGTQYRSAIYPLTPEQDAAARASLERFQAAMLAADDDRRITTEIANATPFYYAEDDHQQYLHKNPYGYCGIGGIGVCLPPEA.

Cys-52 is an active-site residue.

This sequence belongs to the MsrA Met sulfoxide reductase family.

It carries out the reaction L-methionyl-[protein] + [thioredoxin]-disulfide + H2O = L-methionyl-(S)-S-oxide-[protein] + [thioredoxin]-dithiol. The enzyme catalyses [thioredoxin]-disulfide + L-methionine + H2O = L-methionine (S)-S-oxide + [thioredoxin]-dithiol. Functionally, has an important function as a repair enzyme for proteins that have been inactivated by oxidation. Catalyzes the reversible oxidation-reduction of methionine sulfoxide in proteins to methionine. The chain is Peptide methionine sulfoxide reductase MsrA from Shigella dysenteriae serotype 1 (strain Sd197).